The sequence spans 267 residues: L-aspartate dehydrogenase 2 (267 aa).

NAD(+) is bound by residues Ala123 and Asn189. His219 is an active-site residue.

The protein belongs to the L-aspartate dehydrogenase family.

It carries out the reaction L-aspartate + NADP(+) + H2O = oxaloacetate + NH4(+) + NADPH + H(+). The enzyme catalyses L-aspartate + NAD(+) + H2O = oxaloacetate + NH4(+) + NADH + H(+). Its pathway is cofactor biosynthesis; NAD(+) biosynthesis; iminoaspartate from L-aspartate (dehydrogenase route): step 1/1. Specifically catalyzes the NAD or NADP-dependent dehydrogenation of L-aspartate to iminoaspartate. The polypeptide is L-aspartate dehydrogenase 2 (Bordetella pertussis (strain Tohama I / ATCC BAA-589 / NCTC 13251)).